A 343-amino-acid polypeptide reads, in one-letter code: MDPKGSLSWRILLFLSLAFELSYGTGGGVMDCPVILQKLGQDTWLPLTNEHQINKSVNKSVRILVTMATSPGSKSNKKIVSFDLSKGSYPDHLEDGYHFQSKNLSLKILGNRRESEGWYLVSVEENVSVQQFCKQLKLYEQVSPPEIKVLNKTQENENGTCSLLLACTVKKGDHVTYSWSDEAGTHLLSRANRSHLLHITLSNQHQDSIYNCTASNPVSSISRTFNLSSQACKQESSSESSPWMQYTLVPLGVVIIFILVFTAIIMMKRQGKSNHCQPPVEEKSLTIYAQVQKSGPQEKKLHDALTDQDPCTTIYVAATEPAPESVQEPNPTTVYASVTLPES.

An N-terminal signal peptide occupies residues 1–24; that stretch reads MDPKGSLSWRILLFLSLAFELSYG. The Extracellular portion of the chain corresponds to 25–242; that stretch reads TGGGVMDCPV…KQESSSESSP (218 aa). The region spanning 29–138 is the Ig-like V-type domain; the sequence is VMDCPVILQK…VQQFCKQLKL (110 aa). Residues Asn54, Asn58, Asn103, Asn126, Asn151, Asn158, Asn192, Asn211, and Asn226 are each glycosylated (N-linked (GlcNAc...) asparagine). One can recognise an Ig-like C2-type domain in the interval 145-228; the sequence is PEIKVLNKTQ…SSISRTFNLS (84 aa). 2 disulfide bridges follow: Cys161-Cys232 and Cys167-Cys212. The helical transmembrane segment at 243–265 threads the bilayer; it reads WMQYTLVPLGVVIIFILVFTAII. Residues 266–343 are Cytoplasmic-facing; it reads MMKRQGKSNH…VYASVTLPES (78 aa). An ITSM 1 motif is present at residues 286–291; it reads TIYAQV. Residues Tyr288, Tyr315, and Tyr335 each carry the phosphotyrosine; by FYN modification. The short motif at 313-318 is the SH2-binding element; that stretch reads TIYVAA. The disordered stretch occupies residues 320–343; it reads EPAPESVQEPNPTTVYASVTLPES. The span at 327–343 shows a compositional bias: polar residues; the sequence is QEPNPTTVYASVTLPES. The ITSM 2 motif lies at 333 to 338; sequence TVYASV.

In terms of assembly, interacts (via cytoplasmic domain) with SH2D1A and SH2D1B; SH2D1A mediates association with FYN; SH2D1A binds to phosphorylated and not phosphorylated ITSM 1. Interacts (via cytoplasmic domain phosphorylated on tyrosine residues) with INPP5D and PTPN11; presence of SH2D1A facilitates binding to INPP5D. Interacts with MAP4K1. Interacts with PIK3C3, BECN1 and UVRAG; indicative for an association with PI3K complex II (PI3KC3-C2). Post-translationally, phosphorylated on tyrosine residues by FYN.

It is found in the cell membrane. In terms of biological role, self-ligand receptor of the signaling lymphocytic activation molecule (SLAM) family. SLAM receptors triggered by homo- or heterotypic cell-cell interactions are modulating the activation and differentiation of a wide variety of immune cells and thus are involved in the regulation and interconnection of both innate and adaptive immune response. Activities are controlled by presence or absence of small cytoplasmic adapter proteins, SH2D1A/SAP and/or SH2D1B/EAT-2. SLAMF1-induced signal-transduction events in T-lymphocytes are different from those in B-cells. Two modes of SLAMF1 signaling seem to exist: one depending on SH2D1A (and perhaps SH2D1B) and another in which protein-tyrosine phosphatase 2C (PTPN11)-dependent signal transduction operates. Initially it has been proposed that association with SH2D1A prevents binding to inhibitory effectors including INPP5D/SHIP1 and PTPN11/SHP-2. However, signaling is also regulated by SH2D1A which can simultaneously interact with and recruit FYN which subsequently phosphorylates and activates SLAMF1. Mediates IL-2-independent proliferation of activated T-cells during immune responses and induces IFN-gamma production. Downstreaming signaling involves INPP5D, DOK1 and DOK2 leading to inhibited IFN-gamma production in T-cells, and PRKCQ, BCL10 and NFKB1 leading to increased T-cell activation and Th2 cytokine production. Promotes T-cell receptor-induced IL-4 secretion by CD4(+) cells. Inhibits antigen receptor-mediated production of IFN-gamma, but not IL-2, in CD4(-)/CD8(-) T-cells. Required for IL-4 production by germinal centers T follicular helper (T(Fh))cells. May inhibit CD40-induced signal transduction in monocyte-derived dendritic cells. May play a role in allergic responses and may regulate allergen-induced Th2 cytokine and Th1 cytokine secretion. In conjunction with SLAMF6 controls the transition between positive selection and the subsequent expansion and differentiation of the thymocytic natural killer T (NKT) cell lineage. Involved in the peripheral differentiation of indifferent natural killer T (iNKT) cells toward a regulatory NKT2 type. In macrophages involved in down-regulation of IL-12, TNF-alpha and nitric oxide in response to lipopolysaccharide (LPS). In B-cells activates the ERK signaling pathway independently of SH2D1A but implicating both, SYK and INPP5D, and activates Akt signaling dependent on SYK and SH2D1A. In conjunction with CD84/SLAMF5 and SLAMF6 may be a negative regulator of the humoral immune response. Functionally, (Microbial infection) Involved in innate immune response against Gram-negative bacteria in macrophages; probably recognizes OmpC and/or OmpF on the bacterial surface, regulates phagosome maturation and recruitment of the PI3K complex II (PI3KC3-C2) leading to accumulated of PdtIns(3)P and NOX2 activity in the phagosomes. The chain is Signaling lymphocytic activation molecule (Slamf1) from Mus musculus (Mouse).